Consider the following 410-residue polypeptide: MTLSFDLTTEGARDALRARAAPEKPSLIGLTRAELGEALVASGIVPERQAKMRAQQLWHWMYVRGVSDFAGMFNISKDLRAELDKHFTVARPEIVEEQISSDGTRKWLFRFPPRGAGRPVEIETVYIPEEGRGTLCISSQVGCTLTCSFCHTGTQKLVRNLTTEEILAQLLTARDRLGDFPDRDTPDGAIVPAEGRKVSNIVMMGMGEPLYNFEAVKKALLIASDGDGLSLSKRRITLSTSGVVPEIFRTGEEIGVMLAISLHATNDDLRDLLVPINKKYPLKELIAACRAYPGLSNAKRITFEYVMLKDVNDSIEDAKGLIKLLKGIPAKINLIPFNPWPGTNYQCSDWETIEKFADYINNAGYASPIRTPRGRDILAACGQLKSESERMRKVDRLALEAMMIAGHGEA.

The active-site Proton acceptor is the Glu123. Residues Glu129–Leu378 form the Radical SAM core domain. A disulfide bridge links Cys136 with Cys381. [4Fe-4S] cluster contacts are provided by Cys143, Cys147, and Cys150. Residues Gly207–Glu208, Ser239, Ser261–His263, and Asn338 contribute to the S-adenosyl-L-methionine site. Cys381 functions as the S-methylcysteine intermediate in the catalytic mechanism.

It belongs to the radical SAM superfamily. RlmN family. It depends on [4Fe-4S] cluster as a cofactor.

The protein localises to the cytoplasm. It catalyses the reaction adenosine(2503) in 23S rRNA + 2 reduced [2Fe-2S]-[ferredoxin] + 2 S-adenosyl-L-methionine = 2-methyladenosine(2503) in 23S rRNA + 5'-deoxyadenosine + L-methionine + 2 oxidized [2Fe-2S]-[ferredoxin] + S-adenosyl-L-homocysteine. It carries out the reaction adenosine(37) in tRNA + 2 reduced [2Fe-2S]-[ferredoxin] + 2 S-adenosyl-L-methionine = 2-methyladenosine(37) in tRNA + 5'-deoxyadenosine + L-methionine + 2 oxidized [2Fe-2S]-[ferredoxin] + S-adenosyl-L-homocysteine. Functionally, specifically methylates position 2 of adenine 2503 in 23S rRNA and position 2 of adenine 37 in tRNAs. m2A2503 modification seems to play a crucial role in the proofreading step occurring at the peptidyl transferase center and thus would serve to optimize ribosomal fidelity. The polypeptide is Dual-specificity RNA methyltransferase RlmN (Mesorhizobium japonicum (strain LMG 29417 / CECT 9101 / MAFF 303099) (Mesorhizobium loti (strain MAFF 303099))).